The primary structure comprises 444 residues: Tol-Pal system protein TolB (444 aa).

Residues 1–19 (MRNIIYFILSLLFSFASYA) form the signal peptide.

The protein belongs to the TolB family. The Tol-Pal system is composed of five core proteins: the inner membrane proteins TolA, TolQ and TolR, the periplasmic protein TolB and the outer membrane protein Pal. They form a network linking the inner and outer membranes and the peptidoglycan layer.

It localises to the periplasm. In terms of biological role, part of the Tol-Pal system, which plays a role in outer membrane invagination during cell division and is important for maintaining outer membrane integrity. The sequence is that of Tol-Pal system protein TolB from Rickettsia massiliae (strain Mtu5).